The chain runs to 97 residues: Kunitz-type trypsin inhibitor 1 (97 aa).

This sequence belongs to the protease inhibitor I3 (leguminous Kunitz-type inhibitor) family.

Exhibits Kunitz trypsin protease inhibitor activity. The sequence is that of Kunitz-type trypsin inhibitor 1 from Selenicereus costaricensis (Red-fleshed dragon fruit).